The primary structure comprises 148 residues: PTS system fructose-like EIIA component (148 aa).

Residues 2 to 145 (AALTASCIDL…DQVLALLNQT (144 aa)) form the PTS EIIA type-2 domain. The Tele-phosphohistidine intermediate role is filled by histidine 64. Residue histidine 64 is modified to Phosphohistidine; by HPr.

Its subcellular location is the cytoplasm. The phosphoenolpyruvate-dependent sugar phosphotransferase system (sugar PTS), a major carbohydrate active transport system, catalyzes the phosphorylation of incoming sugar substrates concomitantly with their translocation across the cell membrane. The enzyme II FrvAB PTS system is involved in fructose transport. This is PTS system fructose-like EIIA component from Escherichia coli (strain K12).